The sequence spans 1178 residues: DNA-directed RNA polymerase subunit beta' (1178 aa).

Zn(2+) contacts are provided by C60, C62, C75, and C78. The Mg(2+) site is built by D450, D452, and D454. The Zn(2+) site is built by C795, C869, C876, and C879.

The protein belongs to the RNA polymerase beta' chain family. In terms of assembly, the RNAP catalytic core consists of 2 alpha, 1 beta, 1 beta' and 1 omega subunit. When a sigma factor is associated with the core the holoenzyme is formed, which can initiate transcription. It depends on Mg(2+) as a cofactor. Zn(2+) is required as a cofactor.

The enzyme catalyses RNA(n) + a ribonucleoside 5'-triphosphate = RNA(n+1) + diphosphate. In terms of biological role, DNA-dependent RNA polymerase catalyzes the transcription of DNA into RNA using the four ribonucleoside triphosphates as substrates. In Clostridium beijerinckii (strain ATCC 51743 / NCIMB 8052) (Clostridium acetobutylicum), this protein is DNA-directed RNA polymerase subunit beta'.